The primary structure comprises 344 residues: Phenylalanine--tRNA ligase alpha subunit (344 aa).

Glutamate 256 provides a ligand contact to Mg(2+).

It belongs to the class-II aminoacyl-tRNA synthetase family. Phe-tRNA synthetase alpha subunit type 1 subfamily. Tetramer of two alpha and two beta subunits. Mg(2+) serves as cofactor.

It is found in the cytoplasm. The enzyme catalyses tRNA(Phe) + L-phenylalanine + ATP = L-phenylalanyl-tRNA(Phe) + AMP + diphosphate + H(+). In Bacillus subtilis (strain 168), this protein is Phenylalanine--tRNA ligase alpha subunit (pheS).